The sequence spans 431 residues: Phosphoribosylamine--glycine ligase (431 aa).

The 208-residue stretch at 109-316 (KDFLARHGIP…LVDLVEAAID (208 aa)) folds into the ATP-grasp domain. An ATP-binding site is contributed by 135–196 (VREKGAPIVV…EEFLDGEEAS (62 aa)). Mg(2+)-binding residues include Glu286 and Asn288.

Belongs to the GARS family. Requires Mg(2+) as cofactor. It depends on Mn(2+) as a cofactor.

The catalysed reaction is 5-phospho-beta-D-ribosylamine + glycine + ATP = N(1)-(5-phospho-beta-D-ribosyl)glycinamide + ADP + phosphate + H(+). It functions in the pathway purine metabolism; IMP biosynthesis via de novo pathway; N(1)-(5-phospho-D-ribosyl)glycinamide from 5-phospho-alpha-D-ribose 1-diphosphate: step 2/2. The chain is Phosphoribosylamine--glycine ligase from Xanthomonas campestris pv. campestris (strain ATCC 33913 / DSM 3586 / NCPPB 528 / LMG 568 / P 25).